Here is a 215-residue protein sequence, read N- to C-terminus: Thiamine-phosphate synthase 1 (215 aa).

4-amino-2-methyl-5-(diphosphooxymethyl)pyrimidine-binding positions include 35–39 (QYRFE) and N67. Mg(2+) contacts are provided by D68 and D87. 4-amino-2-methyl-5-(diphosphooxymethyl)pyrimidine is bound at residue T106. Residue 132-134 (TST) participates in 2-[(2R,5Z)-2-carboxy-4-methylthiazol-5(2H)-ylidene]ethyl phosphate binding. K135 is a binding site for 4-amino-2-methyl-5-(diphosphooxymethyl)pyrimidine. G162 serves as a coordination point for 2-[(2R,5Z)-2-carboxy-4-methylthiazol-5(2H)-ylidene]ethyl phosphate.

Belongs to the thiamine-phosphate synthase family. Mg(2+) is required as a cofactor.

The enzyme catalyses 2-[(2R,5Z)-2-carboxy-4-methylthiazol-5(2H)-ylidene]ethyl phosphate + 4-amino-2-methyl-5-(diphosphooxymethyl)pyrimidine + 2 H(+) = thiamine phosphate + CO2 + diphosphate. The catalysed reaction is 2-(2-carboxy-4-methylthiazol-5-yl)ethyl phosphate + 4-amino-2-methyl-5-(diphosphooxymethyl)pyrimidine + 2 H(+) = thiamine phosphate + CO2 + diphosphate. It carries out the reaction 4-methyl-5-(2-phosphooxyethyl)-thiazole + 4-amino-2-methyl-5-(diphosphooxymethyl)pyrimidine + H(+) = thiamine phosphate + diphosphate. The protein operates within cofactor biosynthesis; thiamine diphosphate biosynthesis; thiamine phosphate from 4-amino-2-methyl-5-diphosphomethylpyrimidine and 4-methyl-5-(2-phosphoethyl)-thiazole: step 1/1. Condenses 4-methyl-5-(beta-hydroxyethyl)thiazole monophosphate (THZ-P) and 2-methyl-4-amino-5-hydroxymethyl pyrimidine pyrophosphate (HMP-PP) to form thiamine monophosphate (TMP). The polypeptide is Thiamine-phosphate synthase 1 (Aquifex aeolicus (strain VF5)).